We begin with the raw amino-acid sequence, 284 residues long: Tripartite motif-containing protein 12A (284 aa).

Residues 15 to 59 (CPVCLNLMVKPVSADCGHTFCQGCITLYFESIKCDKKVFICPVCR) form an RING-type zinc finger. The B box-type zinc-finger motif lies at 91 to 132 (QKVFNCARHGKKLQLFCRKDMMAICWLCERSQEHRGHKTALI). Zn(2+) contacts are provided by Cys-96, His-99, Cys-118, and His-124. A coiled-coil region spans residues 130–234 (ALIEEVAQEY…QSKLLEDFIS (105 aa)).

Belongs to the TRIM/RBCC family. In terms of tissue distribution, expressed in embryonic CNS, liver, kidney, olfactory epithelium.

The protein resides in the cytoplasm. This Mus musculus (Mouse) protein is Tripartite motif-containing protein 12A (Trim12a).